Reading from the N-terminus, the 642-residue chain is Fimbrin (642 aa).

EF-hand domains are found at residues 16-50 and 51-86; these read EDLFSTIEKFRAIDLDDKGWVEKQQALEAVSKDGD and ATYDEARETLKHVGVDASGRVELDDYVGLVAKLRES. Residues aspartate 29, aspartate 31, tryptophan 35, aspartate 66, serine 68, arginine 70, and aspartate 75 each contribute to the Ca(2+) site. Actin-binding regions lie at residues 125 to 394 and 395 to 642; these read IVAG…GLEP and IQEE…TLNK. Calponin-homology (CH) domains follow at residues 139–259, 287–390, 411–521, and 534–642; these read EEER…RRGL, LPPE…NTHP, EREA…RRNI, and DMSD…TLNK.

Binds to actin, and functionally associates with actin structures involved in the development and maintenance of cell polarity. The polypeptide is Fimbrin (SAC6) (Saccharomyces cerevisiae (strain ATCC 204508 / S288c) (Baker's yeast)).